The following is an 85-amino-acid chain: HssA/B-like protein 62 (85 aa).

Belongs to the hssA/B family.

In Dictyostelium discoideum (Social amoeba), this protein is HssA/B-like protein 62 (hssl62).